The chain runs to 303 residues: Taste receptor type 2 member 13 (303 aa).

Over 1 to 7 (MESALPS) the chain is Extracellular. A helical membrane pass occupies residues 8-28 (IFTLVIIAEFIIGNLSNGFIV). Topologically, residues 29 to 55 (LINCIDWVSKRELSSVDKLLIILAISR) are cytoplasmic. Residues 56 to 76 (IGLIWEILVSWFLALHSLAIF) traverse the membrane as a helical segment. At 77–85 (VSGTGLRIM) the chain is on the extracellular side. The chain crosses the membrane as a helical span at residues 86–106 (IFSWIVSNHFNLWLATILSIF). Over 107–128 (YLLKIASFSSPAFLYLKRRVNK) the chain is Cytoplasmic. The chain crosses the membrane as a helical span at residues 129–149 (VILMILLGTLVFLFLNLIQIN). Topologically, residues 150-184 (MLIKDWLDRYERNTTWNFSMSDFETFSVSVRFTMT) are extracellular. N-linked (GlcNAc...) asparagine glycans are attached at residues asparagine 162 and asparagine 166. The chain crosses the membrane as a helical span at residues 185-205 (MFSLTPFTVAFISFLLLVFSL). Residues 206-232 (QKHLQKMQLNYKGHRDPRTKVHTNALK) lie on the Cytoplasmic side of the membrane. The chain crosses the membrane as a helical span at residues 233–253 (IVISFLLFYASFFLSILISWI). At 254–261 (SELYQNTV) the chain is on the extracellular side. The helical transmembrane segment at 262–282 (IYMLCETIGAFYPSSHSFLLI) threads the bilayer. Over 283 to 303 (LGNAKLRQAFLLVAAKVWAKR) the chain is Cytoplasmic.

The protein belongs to the G-protein coupled receptor T2R family.

It is found in the membrane. Receptor that may play a role in the perception of bitterness and is gustducin-linked. May play a role in sensing the chemical composition of the gastrointestinal content. The activity of this receptor may stimulate alpha gustducin, mediate PLC-beta-2 activation and lead to the gating of TRPM5. This chain is Taste receptor type 2 member 13 (TAS2R13), found in Pan paniscus (Pygmy chimpanzee).